A 349-amino-acid chain; its full sequence is MDLGEIVEDVKREINLNEMKGKKISIDAYNTIYQFLAAIRQPDGTPLIDSKGRITSHLNGLFYRTISIIESGIIPIFVFDGKPPEKKSEEIERRKRAKEEAEKKLEKAKLEGEYREIRKYAQAAVRLSNEMVEESKKLLDAMGIPVVQAPGEGEAEAAYINSIDLSWAAASQDYDSLLFGAKRLVRNITISGKRKLPNKDVYVEIKPELIELESLLKKLGINREQLIDIAILIGTDYNPDGVKGIGVKTALRIIKKYNNIENAIEKGEIQLSKINFDIREIRKLFITPEVKKPTERLELAECNEREIIELLVKNHDFNEDRVNNGIERLKKAIKEAKSVEKQTGLDQWF.

The interval 1–98 (MDLGEIVEDV…EEIERRKRAK (98 aa)) is N-domain. The Mg(2+) site is built by aspartate 27, aspartate 80, glutamate 152, glutamate 154, aspartate 173, aspartate 175, and aspartate 236. An I-domain region spans residues 116 to 258 (EIRKYAQAAV…TALRIIKKYN (143 aa)). An interaction with PCNA region spans residues 341-349 (KQTGLDQWF).

This sequence belongs to the XPG/RAD2 endonuclease family. FEN1 subfamily. As to quaternary structure, interacts with PCNA. PCNA stimulates the nuclease activity without altering cleavage specificity. The cofactor is Mg(2+).

Structure-specific nuclease with 5'-flap endonuclease and 5'-3' exonuclease activities involved in DNA replication and repair. During DNA replication, cleaves the 5'-overhanging flap structure that is generated by displacement synthesis when DNA polymerase encounters the 5'-end of a downstream Okazaki fragment. Binds the unpaired 3'-DNA end and kinks the DNA to facilitate 5' cleavage specificity. Cleaves one nucleotide into the double-stranded DNA from the junction in flap DNA, leaving a nick for ligation. Also involved in the base excision repair (BER) pathway. Acts as a genome stabilization factor that prevents flaps from equilibrating into structures that lead to duplications and deletions. Also possesses 5'-3' exonuclease activity on nicked or gapped double-stranded DNA. In Sulfolobus acidocaldarius (strain ATCC 33909 / DSM 639 / JCM 8929 / NBRC 15157 / NCIMB 11770), this protein is Flap endonuclease 1.